A 251-amino-acid chain; its full sequence is uncharacterized protein (251 aa).

4 disordered regions span residues 1-93 (MQPG…ASPG), 107-152 (GLRS…SRPQ), 169-188 (PSSI…VSLS), and 224-251 (LQAQ…STPS). Residues 225-234 (QAQNLPSSGP) show a composition bias toward polar residues.

This is an uncharacterized protein from Homo sapiens (Human).